We begin with the raw amino-acid sequence, 35 residues long: uncharacterized protein (35 aa).

A signal peptide spans 1-18 (MRSLVFVQLSLLSWEIFC).

This is an uncharacterized protein from Saccharomyces cerevisiae (strain ATCC 204508 / S288c) (Baker's yeast).